Consider the following 915-residue polypeptide: Isoleucine--tRNA ligase (915 aa).

Residues 58–68 carry the 'HIGH' region motif; the sequence is PYANGHLHIGH. Glu568 serves as a coordination point for L-isoleucyl-5'-AMP. Positions 609–613 match the 'KMSKS' region motif; it reads KMSKS. ATP is bound at residue Lys612. 4 residues coordinate Zn(2+): Cys892, Cys895, Cys907, and Cys910.

This sequence belongs to the class-I aminoacyl-tRNA synthetase family. IleS type 1 subfamily. Monomer. Zn(2+) is required as a cofactor.

The protein resides in the cytoplasm. The catalysed reaction is tRNA(Ile) + L-isoleucine + ATP = L-isoleucyl-tRNA(Ile) + AMP + diphosphate. In terms of biological role, catalyzes the attachment of isoleucine to tRNA(Ile). As IleRS can inadvertently accommodate and process structurally similar amino acids such as valine, to avoid such errors it has two additional distinct tRNA(Ile)-dependent editing activities. One activity is designated as 'pretransfer' editing and involves the hydrolysis of activated Val-AMP. The other activity is designated 'posttransfer' editing and involves deacylation of mischarged Val-tRNA(Ile). The protein is Isoleucine--tRNA ligase of Wolinella succinogenes (strain ATCC 29543 / DSM 1740 / CCUG 13145 / JCM 31913 / LMG 7466 / NCTC 11488 / FDC 602W) (Vibrio succinogenes).